Here is a 289-residue protein sequence, read N- to C-terminus: Serine/threonine-protein phosphatase Pgam5, mitochondrial (289 aa).

Belongs to the phosphoglycerate mutase family. BPG-dependent PGAM subfamily. As to quaternary structure, interacts with Pk92B/ASK1.

It localises to the mitochondrion outer membrane. It carries out the reaction O-phospho-L-seryl-[protein] + H2O = L-seryl-[protein] + phosphate. The catalysed reaction is O-phospho-L-threonyl-[protein] + H2O = L-threonyl-[protein] + phosphate. Displays phosphatase activity for serine/threonine residues, and dephosphorylates and activates Pk92B kinase. Has apparently no phosphoglycerate mutase activity. This is Serine/threonine-protein phosphatase Pgam5, mitochondrial from Drosophila grimshawi (Hawaiian fruit fly).